A 235-amino-acid chain; its full sequence is Probable transcriptional regulatory protein Ccon26_04940 (235 aa).

The protein belongs to the TACO1 family.

Its subcellular location is the cytoplasm. The protein is Probable transcriptional regulatory protein Ccon26_04940 of Campylobacter concisus (strain 13826).